A 386-amino-acid polypeptide reads, in one-letter code: S-adenosylmethionine synthase (386 aa).

His-16 is a binding site for ATP. Mg(2+) is bound at residue Asp-18. Glu-44 contributes to the K(+) binding site. The L-methionine site is built by Glu-57 and Gln-100. A flexible loop region spans residues 100–110 (QSSDIAQGVDR). ATP-binding positions include 165–167 (DAK), Asp-240, 246–247 (RK), Ala-263, and Lys-267. Asp-240 is an L-methionine binding site. Lys-271 contributes to the L-methionine binding site.

Belongs to the AdoMet synthase family. As to quaternary structure, homotetramer; dimer of dimers. The cofactor is Mg(2+). K(+) serves as cofactor.

The protein localises to the cytoplasm. The catalysed reaction is L-methionine + ATP + H2O = S-adenosyl-L-methionine + phosphate + diphosphate. It participates in amino-acid biosynthesis; S-adenosyl-L-methionine biosynthesis; S-adenosyl-L-methionine from L-methionine: step 1/1. In terms of biological role, catalyzes the formation of S-adenosylmethionine (AdoMet) from methionine and ATP. The overall synthetic reaction is composed of two sequential steps, AdoMet formation and the subsequent tripolyphosphate hydrolysis which occurs prior to release of AdoMet from the enzyme. This chain is S-adenosylmethionine synthase, found in Francisella philomiragia subsp. philomiragia (strain ATCC 25017 / CCUG 19701 / FSC 153 / O#319-036).